The sequence spans 305 residues: MELIFLGTSAGVPTRTRNVTAILLNLQHPTQAGLWLFDCGEGTQHQMLNTAFNPGKLDRIFISHLHGDHLFGLPGLLCSRSMAGNAQPLTIYGPKGIREFTETALRLSGSWTDYPLEIVEITAGEILNDGLRKVTAFALEHPLECYGYRIEEHDKPGALDASALKAAGVKPGPLFQDLKAGKTVTLNDGRVINGADFLAPATPGKSVAIFGDTAPCASAITLAKGVDVMVHEATLDTSMEEKANSRGHSSTRQAAQLAHNAEVGQLIITHVSSRYDDRGCQRLLAECQAIFPATALAHDFAVFTV.

Zn(2+) is bound by residues H64, H66, D68, H69, H141, D212, and H270. The active-site Proton acceptor is D68.

The protein belongs to the RNase Z family. RNase BN subfamily. Homodimer. The cofactor is Zn(2+).

Zinc phosphodiesterase, which has both exoribonuclease and endoribonuclease activities. This chain is Ribonuclease BN, found in Citrobacter koseri (strain ATCC BAA-895 / CDC 4225-83 / SGSC4696).